The following is a 194-amino-acid chain: Imidazoleglycerol-phosphate dehydratase (194 aa).

The protein belongs to the imidazoleglycerol-phosphate dehydratase family.

It is found in the cytoplasm. It catalyses the reaction D-erythro-1-(imidazol-4-yl)glycerol 3-phosphate = 3-(imidazol-4-yl)-2-oxopropyl phosphate + H2O. The protein operates within amino-acid biosynthesis; L-histidine biosynthesis; L-histidine from 5-phospho-alpha-D-ribose 1-diphosphate: step 6/9. The sequence is that of Imidazoleglycerol-phosphate dehydratase from Bacillus anthracis (strain A0248).